Consider the following 176-residue polypeptide: Inorganic pyrophosphatase (176 aa).

Residues lysine 31, arginine 45, and tyrosine 57 each coordinate substrate. Positions 67, 72, and 104 each coordinate Mg(2+). Residue tyrosine 142 coordinates substrate.

The protein belongs to the PPase family. Homohexamer. Requires Mg(2+) as cofactor.

The protein localises to the cytoplasm. The catalysed reaction is diphosphate + H2O = 2 phosphate + H(+). Catalyzes the hydrolysis of inorganic pyrophosphate (PPi) forming two phosphate ions. This Haemophilus influenzae (strain ATCC 51907 / DSM 11121 / KW20 / Rd) protein is Inorganic pyrophosphatase.